The primary structure comprises 89 residues: Small ribosomal subunit protein uS15 (89 aa).

Belongs to the universal ribosomal protein uS15 family. Part of the 30S ribosomal subunit. Forms a bridge to the 50S subunit in the 70S ribosome, contacting the 23S rRNA.

One of the primary rRNA binding proteins, it binds directly to 16S rRNA where it helps nucleate assembly of the platform of the 30S subunit by binding and bridging several RNA helices of the 16S rRNA. Its function is as follows. Forms an intersubunit bridge (bridge B4) with the 23S rRNA of the 50S subunit in the ribosome. The protein is Small ribosomal subunit protein uS15 of Desulfatibacillum aliphaticivorans.